The sequence spans 367 residues: Histone RNA hairpin-binding protein (367 aa).

Over residues 1–12 (MAQKTPTKGTRS) the composition is skewed to polar residues. Disordered regions lie at residues 1–24 (MAQK…SPIK) and 49–200 (EVTE…HWEE). Positions 57 to 73 (LASRLEEERRCKSESRR) are enriched in basic and acidic residues. Residues 147-156 (SNASTINEGA) show a composition bias toward polar residues. Over residues 183–192 (SDSSSVASSP) the composition is skewed to low complexity. The segment at 206-275 (CTDEAVLKRR…KWKRSLYEYC (70 aa)) is RNA-binding. The segment at 342 to 367 (MDESTLKASTNTDPSAPTDFSKMSSH) is disordered. The span at 347-356 (LKASTNTDPS) shows a compositional bias: polar residues.

Belongs to the SLBP family. Post-translationally, ubiquitinated by the CBC(fem-1) (Cul2-ElonginB-ElonginC) E3 ubiquitin-protein ligase complex, leading to its degradation.

Involved in histone pre-mRNA 3' processing. Required for chromosome condensation, progression of cell death and morphogenesis. This Caenorhabditis elegans protein is Histone RNA hairpin-binding protein (cdl-1).